Consider the following 1096-residue polypeptide: Mediator of replication checkpoint protein 1 (1096 aa).

Over residues 68-85 (EGKKAPEQNHNNGKDRSE) the composition is skewed to basic and acidic residues. Residues 68–90 (EGKKAPEQNHNNGKDRSENSLPT) form a disordered region. The residue at position 144 (Ser144) is a Phosphoserine. Disordered regions lie at residues 166–200 (ALKTPLTTGRPGATQRIDSSGATSQTQPIKSIEPQ), 294–316 (IQSELASEDSKREKARNVEYKKP), and 336–365 (DDSSSNEDDDIKLENAHPKPVQNDDELHEN). A compositionally biased stretch (polar residues) spans 181–200 (RIDSSGATSQTQPIKSIEPQ). Basic and acidic residues predominate over residues 294-315 (IQSELASEDSKREKARNVEYKK). A compositionally biased stretch (acidic residues) spans 336 to 346 (DDSSSNEDDDI). A phosphoserine mark is found at Ser409, Ser411, and Ser434. Positions 488–542 (QKEVIETKGLKLEDMAKEKEIVENLLEQEILRNKRIRQKEKRREKLEENDFQLNA) form a coiled coil. A disordered region spans residues 527 to 620 (EKRREKLEEN…VEAKPKEKAD (94 aa)). The segment covering 547-560 (SDSGSESSGFALSG) has biased composition (low complexity). A compositionally biased stretch (basic residues) spans 591 to 600 (KQKKSHHVKH). Ser605 and Ser607 each carry phosphoserine. Thr609 carries the post-translational modification Phosphothreonine. The segment covering 611–620 (VEAKPKEKAD) has biased composition (basic and acidic residues). Residues 652 to 716 (DTQNIEEVMA…IKELKKRGVT (65 aa)) are a coiled coil. Residues 724-743 (EESEDEWHGIGGADGEGSDD) are disordered. Phosphoserine is present on residues Ser801 and Ser807. Residues 881–898 (DTQDNSINVGDNTGNNEQ) are compositionally biased toward polar residues. Positions 881-903 (DTQDNSINVGDNTGNNEQKPVDQ) are disordered. The residue at position 911 (Ser911) is a Phosphoserine. Positions 1058–1096 (RKTEGSHRYHHDHHNKKMKMKTKTKSNKLFESGQDSFDN) are disordered. Positions 1065–1083 (RYHHDHHNKKMKMKTKTKS) are enriched in basic residues.

Interacts with CDC45 in S phase. In terms of processing, phosphorylated by MEC1 and RAD53.

It localises to the nucleus. Functionally, required for normal DNA replication. Phosphorylated in response to DNA replication stress. Phosphorylation allows it to mediate the activation of RAD53. The polypeptide is Mediator of replication checkpoint protein 1 (MRC1) (Saccharomyces cerevisiae (strain ATCC 204508 / S288c) (Baker's yeast)).